Consider the following 273-residue polypeptide: Glucosamine-6-phosphate deaminase (273 aa).

Residue D72 is the Proton acceptor; for enolization step of the active site. Residue D141 is the For ring-opening step of the active site. H143 functions as the Proton acceptor; for ring-opening step in the catalytic mechanism. Residue E148 is the For ring-opening step of the active site.

Belongs to the glucosamine/galactosamine-6-phosphate isomerase family. As to quaternary structure, homohexamer.

Its subcellular location is the cytoplasm. The catalysed reaction is alpha-D-glucosamine 6-phosphate + H2O = beta-D-fructose 6-phosphate + NH4(+). It functions in the pathway nucleotide-sugar biosynthesis; UDP-N-acetyl-alpha-D-glucosamine biosynthesis; alpha-D-glucosamine 6-phosphate from D-fructose 6-phosphate: step 1/1. Catalyzes the reversible conversion of alpha-D-glucosamine 6-phosphate (GlcN-6P) into beta-D-fructose 6-phosphate (Fru-6P) and ammonium ion, a regulatory reaction step in de novo uridine diphosphate-N-acetyl-alpha-D-glucosamine (UDP-GlcNAc) biosynthesis via hexosamine pathway. The protein is Glucosamine-6-phosphate deaminase of Drosophila melanogaster (Fruit fly).